We begin with the raw amino-acid sequence, 236 residues long: Small ribosomal subunit protein uS2c (236 aa).

The protein belongs to the universal ribosomal protein uS2 family.

The protein resides in the plastid. The sequence is that of Small ribosomal subunit protein uS2c (rps2) from Cuscuta exaltata (Tall dodder).